A 196-amino-acid chain; its full sequence is Phosphoheptose isomerase (196 aa).

In terms of domain architecture, SIS spans 36–195 (VIQAYKLGKK…EKELFGEKVD (160 aa)). 51–53 (NGG) is a substrate binding site. Residues H60 and E64 each contribute to the Zn(2+) site. Residues E64, 93 to 94 (ND), 119 to 121 (STS), S124, and Q171 each bind substrate. Zn(2+)-binding residues include Q171 and H179.

Belongs to the SIS family. GmhA subfamily. Requires Zn(2+) as cofactor.

It is found in the cytoplasm. It carries out the reaction 2 D-sedoheptulose 7-phosphate = D-glycero-alpha-D-manno-heptose 7-phosphate + D-glycero-beta-D-manno-heptose 7-phosphate. It participates in carbohydrate biosynthesis; D-glycero-D-manno-heptose 7-phosphate biosynthesis; D-glycero-alpha-D-manno-heptose 7-phosphate and D-glycero-beta-D-manno-heptose 7-phosphate from sedoheptulose 7-phosphate: step 1/1. Catalyzes the isomerization of sedoheptulose 7-phosphate in D-glycero-D-manno-heptose 7-phosphate. In Clostridium acetobutylicum (strain ATCC 824 / DSM 792 / JCM 1419 / IAM 19013 / LMG 5710 / NBRC 13948 / NRRL B-527 / VKM B-1787 / 2291 / W), this protein is Phosphoheptose isomerase.